The following is a 238-amino-acid chain: Probable 2-phosphosulfolactate phosphatase (238 aa).

It belongs to the ComB family. The cofactor is Mg(2+).

It catalyses the reaction (2R)-O-phospho-3-sulfolactate + H2O = (2R)-3-sulfolactate + phosphate. The chain is Probable 2-phosphosulfolactate phosphatase from Carboxydothermus hydrogenoformans (strain ATCC BAA-161 / DSM 6008 / Z-2901).